Consider the following 702-residue polypeptide: Choline transporter-like protein 5-A (702 aa).

A helical transmembrane segment spans residues 21 to 41; that stretch reads VLCCVLFVIVILGYIALGTVA. The Extracellular portion of the chain corresponds to 42-225; the sequence is WIHGDPRKVI…KIVEDYASCW (184 aa). N-linked (GlcNAc...) asparagine glycosylation is found at Asn-120, Asn-173, and Asn-180. Residues 226–246 traverse the membrane as a helical segment; the sequence is YWIVIGLFIALVISLIFILLL. The Cytoplasmic portion of the chain corresponds to 247–249; that stretch reads RFT. A helical membrane pass occupies residues 250–270; that stretch reads AGFLLWFIIFAVILLVAYGIW. Topologically, residues 271-308 are extracellular; sequence HCYWEFAVLRETPGADVTISDIGFQTDLHVYLQLSQTW. Residues 309–329 traverse the membrane as a helical segment; that stretch reads LVFMVTLGLTEASIVLMLIFL. The Cytoplasmic segment spans residues 330 to 334; the sequence is RKRVR. The chain crosses the membrane as a helical span at residues 335-355; it reads IAIALLREGSRAISYIMSALF. The Extracellular segment spans residues 356–357; sequence YP. The chain crosses the membrane as a helical span at residues 358–378; the sequence is IITFVLLAICISYWAMTALFL. Topologically, residues 379 to 443 are cytoplasmic; that stretch reads ASSGDAVYKV…RYIFILQLCN (65 aa). The chain crosses the membrane as a helical span at residues 444-464; the sequence is LLVFLWLVNFTIALGQCTVAG. At 465–498 the chain is on the extracellular side; the sequence is AFASYYWARRKPADIPPCPVFSSFSRALRYHTGS. The helical transmembrane segment at 499–519 threads the bilayer; it reads LAFGSLILAVVQLIRVILEYL. Topologically, residues 520–593 are cytoplasmic; the sequence is DHKLKGAHNA…RVAVLDKVTD (74 aa). The chain crosses the membrane as a helical span at residues 594 to 614; sequence FLLFLGKLLIAGSVGVIAFFL. Residues 615-632 lie on the Extracellular side of the membrane; the sequence is FTRKIPIIQEEVPVLNYY. Residues 633-653 form a helical membrane-spanning segment; the sequence is CVPLLTVILGSYLIAHSFFSV. Residues 654–699 lie on the Cytoplasmic side of the membrane; the sequence is YAMCVDTLFLCFCEDLERNDGTTAKPFFMSPGLKRILGKAEQSPKK.

Belongs to the CTL (choline transporter-like) family.

Its subcellular location is the cell membrane. The enzyme catalyses choline(out) + n H(+)(in) = choline(in) + n H(+)(out). Choline/H+ antiporter. The sequence is that of Choline transporter-like protein 5-A (slc44a5a) from Danio rerio (Zebrafish).